The sequence spans 172 residues: Chromosome-anchoring protein RacA (172 aa).

The segment at residues 5–25 (TSDVAIRLGVSPKTIQRWVRK) is a DNA-binding region (H-T-H motif). 2 disordered regions span residues 57–76 (AAME…RNNI) and 142–172 (QLNN…GLFA). Residues 62–71 (PPTPKRPPTP) are compositionally biased toward pro residues. A coiled-coil region spans residues 83-146 (ESIEPEIARV…ARLEQQLNNR (64 aa)). Over residues 142-151 (QLNNRPPSSH) the composition is skewed to polar residues.

The protein belongs to the RacA family.

The protein resides in the cytoplasm. Required for the formation of axial filaments and for anchoring the origin regions at the cell poles in sporulating cells, thus ensuring proper chromosome segregation in the prespore. Binds in a dispersed manner throughout the chromosome but preferentially to sites clustered in the origin portion of the chromosome, causing condensation of the chromosome and its remodeling into an elongated, anchored structure. The protein is Chromosome-anchoring protein RacA of Geobacillus kaustophilus (strain HTA426).